We begin with the raw amino-acid sequence, 384 residues long: 4-coumarate--CoA ligase (384 aa).

It belongs to the ATP-dependent AMP-binding enzyme family.

The enzyme catalyses (E)-4-coumarate + ATP + CoA = (E)-4-coumaroyl-CoA + AMP + diphosphate. In terms of biological role, converts p-coumaric acid into p-coumaryl CoA. This is necessary for the activation of the photoactive yellow protein (PYP) chromophore. The chain is 4-coumarate--CoA ligase (pcl) from Rhodobacter capsulatus (strain ATCC BAA-309 / NBRC 16581 / SB1003).